The sequence spans 547 residues: Chaperonin GroEL (547 aa).

ATP-binding positions include 30-33, Lys-51, 87-91, Gly-415, 479-481, and Asp-495; these read TLGP, DGTTT, and NAA. The interval 525–547 is disordered; that stretch reads PKEDKPDLGGGNPGGAGGMGGMM. The segment covering 532-547 has biased composition (gly residues); it reads LGGGNPGGAGGMGGMM.

The protein belongs to the chaperonin (HSP60) family. Forms a cylinder of 14 subunits composed of two heptameric rings stacked back-to-back. Interacts with the co-chaperonin GroES.

It is found in the cytoplasm. The catalysed reaction is ATP + H2O + a folded polypeptide = ADP + phosphate + an unfolded polypeptide.. Its function is as follows. Together with its co-chaperonin GroES, plays an essential role in assisting protein folding. The GroEL-GroES system forms a nano-cage that allows encapsulation of the non-native substrate proteins and provides a physical environment optimized to promote and accelerate protein folding. The polypeptide is Chaperonin GroEL (Blochmanniella floridana).